We begin with the raw amino-acid sequence, 231 residues long: 7-cyano-7-deazaguanine synthase (231 aa).

ATP is bound at residue 8–18 (FSGGQDSTTCL). Zn(2+) contacts are provided by Cys188, Cys197, Cys200, and Cys203.

It belongs to the QueC family. Zn(2+) serves as cofactor.

The enzyme catalyses 7-carboxy-7-deazaguanine + NH4(+) + ATP = 7-cyano-7-deazaguanine + ADP + phosphate + H2O + H(+). It participates in purine metabolism; 7-cyano-7-deazaguanine biosynthesis. Functionally, catalyzes the ATP-dependent conversion of 7-carboxy-7-deazaguanine (CDG) to 7-cyano-7-deazaguanine (preQ(0)). This Pectobacterium carotovorum subsp. carotovorum (strain PC1) protein is 7-cyano-7-deazaguanine synthase.